Reading from the N-terminus, the 381-residue chain is Galactose-1-phosphate uridylyltransferase (381 aa).

Zn(2+) contacts are provided by Cys65 and Cys68. Position 90 to 91 (90 to 91) interacts with UDP-alpha-D-glucose; sequence ND. Residue His131 participates in Zn(2+) binding. Residue Asn175 participates in UDP-alpha-D-glucose binding. His186 serves as a coordination point for Zn(2+). His188 functions as the Tele-UMP-histidine intermediate in the catalytic mechanism. UDP-alpha-D-glucose is bound at residue Gln190. Residues Glu204, His306, His323, and His325 each contribute to the Fe cation site. Residues 338-341 and 343-344 each bind UDP-alpha-D-glucose; these read KFMV and FE.

The protein belongs to the galactose-1-phosphate uridylyltransferase type 1 family. Homodimer. It depends on Zn(2+) as a cofactor.

The enzyme catalyses alpha-D-galactose 1-phosphate + UDP-alpha-D-glucose = alpha-D-glucose 1-phosphate + UDP-alpha-D-galactose. It functions in the pathway carbohydrate metabolism; galactose metabolism. The polypeptide is Galactose-1-phosphate uridylyltransferase (GAL7) (Cryptococcus neoformans var. neoformans serotype D (strain B-3501A) (Filobasidiella neoformans)).